The following is a 697-amino-acid chain: Disintegrin and metalloproteinase domain-containing protein 26A (697 aa).

The first 22 residues, 1 to 22 (MFLKFCLWTMFFFSAWSPIGHA), serve as a signal peptide directing secretion. The propeptide occupies 23–187 (KYSSLLEVVT…NAPTLLQIPY (165 aa)). An N-linked (GlcNAc...) asparagine glycan is attached at N127. A Cysteine switch motif is present at residues 159 to 166 (MRCGLSEE). A Zn(2+)-binding site is contributed by C161. The Extracellular segment spans residues 188 to 671 (ENWWTHHRFI…PPLPLSHSKW (484 aa)). In terms of domain architecture, Peptidase M12B spans 195–385 (RFIEYFVVLD…TKRSCLYDIP (191 aa)). An N-linked (GlcNAc...) asparagine glycan is attached at N214. 3 disulfide bridges follow: C305–C380, C344–C366, and C346–C351. Position 329 (H329) interacts with Zn(2+). E330 is a catalytic residue. Zn(2+)-binding residues include H333 and H339. N-linked (GlcNAc...) asparagine glycans are attached at residues N365, N391, N464, N506, N531, and N573. In terms of domain architecture, Disintegrin spans 392 to 478 (LTVCGNKVVE…ECPGDVYKAD (87 aa)). A disulfide bridge links C450 with C470. The 34-residue stretch at 616–649 (LVSNCSPQLYHMQGICNNKQHCHCGVTWKPPDCQ) folds into the EGF-like domain. 2 cysteine pairs are disulfide-bonded: C620-C631 and C639-C648. The chain crosses the membrane as a helical span at residues 672–692 (IVYILIVLDVCIVIIIYLFSF). Residues 693–697 (YKLSK) are Cytoplasmic-facing.

It depends on Zn(2+) as a cofactor. In terms of tissue distribution, expressed in sperm (at protein level). Expressed specifically in testis.

It localises to the membrane. Sperm surface membrane protein that may be involved in spermatogenesis and fertilization. The sequence is that of Disintegrin and metalloproteinase domain-containing protein 26A from Mus musculus (Mouse).